Reading from the N-terminus, the 1366-residue chain is MTSSKPKKSSRVRKTSKNSKKNNKIIMPTLAKTPPSFKNKVVDKKALKNLVSWAYKTHGTAVTAAMADNLKDLGFKYATQAAVSISVEDLKVPEAKQDLIGQAEAQITSTEECYRLGEITEVERHTKVIDTWTETNERLVDAVKNNFNQNDPLNSVWMMANSGARGNMSQVRQLVGMRGLMANPQGEIIDLPIRTNFREGLTVTEYVISSYGARKGLVDTALRTADSGYLTRRLVDVAQDVIVREEDCGTERSIVIEAEDGKFGSRLIGRLSAEDVLDSEDNLIIPKNTAIDPSLSKTIETSLISTVNIRSPLTCEANRSVCRKCYGWALAHNHLVDLGEAVGIIAAQSIGEPGTQLTMRTFHTGGVSTAESGVVRSKIKGKVEFSSKAKIRGYRTPHGVEAKQAEVDFLLKIIPSGNNSNKAQKIEVTSGSLLFVDDGQEIDSDITVAQITSGAVKKSVEKATKDVICDLAGQVRYDKVLQPKEVTDRQGNITLKAQRLGRLWVLAGDVYNLPPNAKPVISTEKNVEQGTVLAEASQYSEFGGEVRLRESVGDSREVQIVTTSMLLSNFNLIEESTHSGEIFHLESNDGTIYRLNTSPGSKISSGEVIADLADERFRTKTGGLVKYAPGLSVKKARSSKNGFEVSQGGTLLWIPQETHEINKDISLLMTEDMAWIEAGTEVVKDIFSQTSGIVTVTQKNDILREITVRNGSFHECEDEEVLNRFTEEGQLVNPGEKIIDGVDNNEILFVQKLETSKSKGLLLRTVEEFNIPDEAELPELTHVKQEKGPSLGLKAIQRLSYKDGELIKSVEGVELLKTHLSLESFDATPQMTIDVETIKDKSNDSINRLNLVILESILVRRDTISDSSHGSTHTELQVKNNQQVKAGDVIATTQILCKEKGIVQLPDLVENEPIRRLIVEREEDKIKINITGKALVKVGDRVVDGDSISEGEKATSCGEIEEVSSKCVTLRLGRPYMVSPDSVLHVKDGDLVLRGDGLALLVFERQKTGDIVQGLPRIEELLEARRPRDSSTLCKRSGVVQIKEGNDDESVSLSVIERDDSINEYQLLIGQNIMVSDGQQVKGGELLTDGPINPHELLDCLFTDIKDQKPLMDAARESISKLQRRMVNEVQNVYKSQGVAIDDKHIEVIVRQMTSKVRIEDAGDTTLLPGELIELRQVEDTNQAMSITGGAPAEFTPVLLGITKASLNTDSFISAASFQETTRVLTEAAIEGKSDWLRGLKENVIIGRLIPAGTGFSGFVEELASEAGPHPDILAEESGGYRRAQNLRPDYTVDMPQSPTVSSTAILDDPSDEDLETTRNRHGIDPSSSNFAAFARPNAENQFSEDQLPDPAALEGLQEEGLLSDE.

Residues 1–23 (MTSSKPKKSSRVRKTSKNSKKNN) show a composition bias toward basic residues. A disordered region spans residues 1–25 (MTSSKPKKSSRVRKTSKNSKKNNKI). 4 residues coordinate Zn(2+): cysteine 248, cysteine 315, cysteine 322, and cysteine 325. The interval 1290–1366 (DYTVDMPQSP…LQEEGLLSDE (77 aa)) is disordered. Positions 1295–1305 (MPQSPTVSSTA) are enriched in polar residues. The segment covering 1354 to 1366 (LEGLQEEGLLSDE) has biased composition (low complexity).

It belongs to the RNA polymerase beta' chain family. RpoC2 subfamily. In terms of assembly, in cyanobacteria the RNAP catalytic core is composed of 2 alpha, 1 beta, 1 beta', 1 gamma and 1 omega subunit. When a sigma factor is associated with the core the holoenzyme is formed, which can initiate transcription. The cofactor is Zn(2+).

It catalyses the reaction RNA(n) + a ribonucleoside 5'-triphosphate = RNA(n+1) + diphosphate. DNA-dependent RNA polymerase catalyzes the transcription of DNA into RNA using the four ribonucleoside triphosphates as substrates. This is DNA-directed RNA polymerase subunit beta' from Prochlorococcus marinus (strain MIT 9515).